The following is a 165-amino-acid chain: UPF0114 protein in repA1-repA2 intergenic region (165 aa).

The next 3 membrane-spanning stretches (helical) occupy residues 15 to 35, 53 to 73, and 136 to 156; these read LMFP…VKFF, LVLI…LVMV, and IMWC…MAYI.

The protein belongs to the UPF0114 family.

The protein localises to the cell membrane. In Buchnera aphidicola subsp. Thelaxes suberi, this protein is UPF0114 protein in repA1-repA2 intergenic region.